The chain runs to 227 residues: tRNA (guanine-N(1)-)-methyltransferase (227 aa).

S-adenosyl-L-methionine-binding positions include G110 and 129 to 134 (IGDYVL).

The protein belongs to the RNA methyltransferase TrmD family. As to quaternary structure, homodimer.

It localises to the cytoplasm. The catalysed reaction is guanosine(37) in tRNA + S-adenosyl-L-methionine = N(1)-methylguanosine(37) in tRNA + S-adenosyl-L-homocysteine + H(+). Specifically methylates guanosine-37 in various tRNAs. This Mycoplasmopsis synoviae (strain 53) (Mycoplasma synoviae) protein is tRNA (guanine-N(1)-)-methyltransferase.